The chain runs to 2387 residues: Highly reducing polyketide synthase curS1 (2387 aa).

Positions 10-433 constitute a Ketosynthase family 3 (KS3) domain; that stretch reads DVPIAVVGLS…GTNGHVVLES (424 aa). Active-site for beta-ketoacyl synthase activity residues include C182, H316, and H356. The segment at 551–891 is malonyl-CoA:ACP transacylase (MAT) domain; that stretch reads FVFTGQGAQW…ELASELFLKG (341 aa). The For malonyltransferase activity role is filled by S641. Positions 940–1075 are N-terminal hotdog fold; that stretch reads KSIIGAQVPM…GLITIDYAET (136 aa). A PKS/mFAS DH domain is found at 940–1259; that stretch reads KSIIGAQVPM…VSELENDSGE (320 aa). The dehydratase (DH) domain stretch occupies residues 942–1256; that stretch reads IIGAQVPMMD…DYRVSELEND (315 aa). The Proton acceptor; for dehydratase activity role is filled by H972. Residues 1103 to 1259 are C-terminal hotdog fold; sequence SYTYSKEDFY…VSELENDSGE (157 aa). The active-site Proton donor; for dehydratase activity is D1169. The segment at 1673–1987 is enoylreductase (ER) domain; that stretch reads GLMDTLTFIE…QGKHRGKLVL (315 aa). Positions 2011 to 2191 are catalytic ketoreductase (KRc) domain; it reads STYLFIGGLG…VAVDLGIMRD (181 aa). One can recognise a Carrier domain in the interval 2302 to 2379; sequence EAVVIITDAL…VFAGKIAEKS (78 aa). An O-(pantetheine 4'-phosphoryl)serine modification is found at S2339.

It participates in mycotoxin biosynthesis. Its function is as follows. Highly reducing polyketide synthase; part of the gene cluster that mediates the biosynthesis of 10,11-dehydrocurvularin, a prevalent fungal phytotoxin with heat shock response and immune-modulatory activities. The highly reducing polyketide synthase curS1 is responsible for biosynthesis up to the tetraketide stage. The non-reducing polyketide synthase curS2 then conducts four additional chain extension cycles, producing the unreduced part of the nascent octaketide from C-1 to C-8 in 10,11-dehydrocurvularin. This chain is Highly reducing polyketide synthase curS1, found in Aspergillus terreus.